Consider the following 348-residue polypeptide: Alcohol dehydrogenase 2 (348 aa).

Position 2 is an N-acetylserine (Ser-2). Position 44 (Cys-44) interacts with Zn(2+). Residues His-45, Thr-46, and His-49 each contribute to the NAD(+) site. His-67, Glu-68, Cys-98, Cys-101, Cys-104, Cys-112, and Cys-154 together coordinate Zn(2+). NAD(+)-binding residues include Gly-181, Gly-182, Leu-183, Asp-202, and Lys-207. Ser-213 carries the phosphoserine modification. Phe-222 is an NAD(+) binding site. At Thr-223 the chain carries Phosphothreonine. Residues Lys-226 and Lys-234 each participate in a glycyl lysine isopeptide (Lys-Gly) (interchain with G-Cter in ubiquitin) cross-link. Val-269 serves as a coordination point for NAD(+). Position 279 is a phosphoserine (Ser-279). Residue Lys-287 forms a Glycyl lysine isopeptide (Lys-Gly) (interchain with G-Cter in ubiquitin) linkage. 2 residues coordinate NAD(+): Ser-294 and Val-296. At Ser-316 the chain carries Phosphoserine. A Glycyl lysine isopeptide (Lys-Gly) (interchain with G-Cter in ubiquitin) cross-link involves residue Lys-319. Arg-341 contributes to the NAD(+) binding site.

It belongs to the zinc-containing alcohol dehydrogenase family. Homotetramer. The cofactor is Zn(2+).

It is found in the cytoplasm. It catalyses the reaction a primary alcohol + NAD(+) = an aldehyde + NADH + H(+). It carries out the reaction a secondary alcohol + NAD(+) = a ketone + NADH + H(+). The enzyme catalyses ethanol + NAD(+) = acetaldehyde + NADH + H(+). The catalysed reaction is butan-1-ol + NAD(+) = butanal + NADH + H(+). It catalyses the reaction hexan-1-ol + NAD(+) = hexanal + NADH + H(+). Functionally, preferentially oxidative, glucose-repressed isozyme that catalyzes the conversion of ethanol to acetaldehyde. Main enzyme involved in ethanol consumption. Acts on a variety of primary unbranched aliphatic alcohols. Also produces ethanol from glucose, albeit less than ADH1. In Saccharomyces cerevisiae (strain ATCC 204508 / S288c) (Baker's yeast), this protein is Alcohol dehydrogenase 2 (ADH2).